Reading from the N-terminus, the 245-residue chain is Terpene cyclase prhH (245 aa).

7 helical membrane-spanning segments follow: residues 17 to 37, 51 to 71, 76 to 96, 113 to 133, 138 to 158, 170 to 190, and 205 to 225; these read ILAI…VNYI, IGIL…WMFP, HWQG…LVTL, IVFI…ALAA, ALGF…CGIA, SYLI…KLCI, and PMCW…PFLY.

It belongs to the paxB family.

It is found in the membrane. Its pathway is secondary metabolite biosynthesis; terpenoid biosynthesis. In terms of biological role, terpene cyclase; part of the gene cluster that mediates the biosynthesis of paraherquonin, a meroterpenoid with a unique, highly congested hexacyclic molecular architecture. The first step of the pathway is the synthesis of 3,5-dimethylorsellinic acid (DMOA) by the polyketide synthase prhL. Synthesis of DMOA is followed by farnesylation by the prenyltransferase prhE, methylesterification by the methyl-transferase prhM, epoxidation of the prenyl chain by the flavin-dependent monooxygenase prhF, and cyclization of the farnesyl moiety by the terpene cyclase prhH, to yield the tetracyclic intermediate, protoaustinoid A. The short chain dehydrogenase prhI then oxidizes the C-3 alcohol group of the terpene cyclase product to transform protoaustinoid A into protoaustinoid B. The FAD-binding monooxygenase prhJ catalyzes the oxidation of protoaustinoid B into preaustinoid A which is further oxidized into preaustinoid A1 by FAD-binding monooxygenase phrK. Finally, prhA leads to berkeleydione via the berkeleyone B intermediate. PrhA is a multifunctional dioxygenase that first desaturates at C5-C6 to form berkeleyone B, followed by rearrangement of the A/B-ring to form the cycloheptadiene moiety in berkeleydione. Berkeleydione serves as the key intermediate for the biosynthesis of paraherquonin as well as many other meroterpenoids. The cytochrome P450 monooxygenases prhB, prhD, and prhN, as well as the isomerase prhC, are probably involved in the late stage of paraherquonin biosynthesis, after the production of berkeleydione. Especially prhC might be a multifunctional enzyme that catalyzes the D-ring expansion via intramolecular methoxy rearrangement, as well as the hydrolysis of the expanded D-ring. The protein is Terpene cyclase prhH of Penicillium brasilianum.